We begin with the raw amino-acid sequence, 342 residues long: MQSYIKNFESSWFAAVMGTGVLAVTSLFYSEYLPILKDISFLLFYFNILLFFVFLMLWILRWVKYPKNMIAELKHPVLSSFSPTVAVAMLVLGIDFILIKNNLFLGKIFWVFGAIGMFLFSLIVPFYMFKSESIKLDHVNPGWYIPPVGLIVIPIAGSLIMPHLTGVWHELTVLINYFGWGAGFFLYLALLAVVIYRFILHHPLPSAMAPTVWINLGPIGAGIVALINMVNNSPFITIKEPFYIFSFIFWGFGLWWSLMAIIMTLYYVKKLKLPYAMSWWAFIFPLGVYIASTHLVYKIFGFEIVDYIGFGLYWLLFFFWIVTLIKTINKVYSGELFKDKIN.

Helical transmembrane passes span 8 to 28 (FESS…TSLF), 39 to 59 (ISFL…MLWI), 79 to 99 (SSFS…FILI), 108 to 128 (IFWV…PFYM), 142 to 162 (GWYI…LIMP), 175 to 195 (INYF…AVVI), 207 to 227 (AMAP…VALI), 242 to 262 (FYIF…MAII), 276 to 296 (AMSW…THLV), and 304 to 324 (IVDY…IVTL).

The protein belongs to the tellurite-resistance/dicarboxylate transporter (TDT) family.

It localises to the cell membrane. This is an uncharacterized protein from Methanocaldococcus jannaschii (strain ATCC 43067 / DSM 2661 / JAL-1 / JCM 10045 / NBRC 100440) (Methanococcus jannaschii).